Reading from the N-terminus, the 563-residue chain is Autophagy-related protein 18 (563 aa).

WD repeat units lie at residues 36–74, 247–287, and 292–331; these read KTDDSVNFITFNQDASCIAVGLNNGYKIFNCKPKFGKCY, AHKS…KLFQ, and TYSTKIYSLSFSSDNNYVVATSSSETVHIFRLGESEALEN. Positions 288–292 match the L/FRRG motif motif; that stretch reads FRRGT. Positions 329-430 are disordered; the sequence is LENKHKKKKA…SSQAAKNEPL (102 aa). Over residues 366–393 the composition is skewed to acidic residues; sequence TQDDDEFADDGDDSDEAVEGDDNDDESL. The span at 404 to 417 shows a compositional bias: low complexity; sequence SQGSSNSFASFNSG.

The protein belongs to the WD repeat PROPPIN family. As to quaternary structure, component of the PI(3,5)P2 regulatory complex.

The protein resides in the preautophagosomal structure membrane. The protein localises to the vacuole membrane. Its subcellular location is the endosome membrane. In terms of biological role, the PI(3,5)P2 regulatory complex regulates both the synthesis and turnover of phosphatidylinositol 3,5-bisphosphate (PtdIns(3,5)P2). Necessary for proper vacuole morphology. Plays an important role in osmotically-induced vacuole fragmentation. Required for cytoplasm to vacuole transport (Cvt) vesicle formation, pexophagy and starvation-induced autophagy. Involved in correct ATG9 trafficking to the pre-autophagosomal structure. Might also be involved in premeiotic DNA replication. The polypeptide is Autophagy-related protein 18 (ATG18) (Scheffersomyces stipitis (strain ATCC 58785 / CBS 6054 / NBRC 10063 / NRRL Y-11545) (Yeast)).